The chain runs to 92 residues: Putative defensin-like protein 225 (92 aa).

Residues 1–26 (MKYGVLFMVSCGVMFLILSHVEEVEA) form the signal peptide. 3 disulfides stabilise this stretch: Cys-32/Cys-92, Cys-42/Cys-70, and Cys-68/Cys-88.

This sequence belongs to the DEFL family.

The protein resides in the secreted. This chain is Putative defensin-like protein 225 (SCRL1), found in Arabidopsis thaliana (Mouse-ear cress).